The following is a 441-amino-acid chain: Divalent metal cation transporter MntH (441 aa).

A run of 11 helical transmembrane segments spans residues 41 to 61 (TGIA…IGYM), 74 to 94 (AAYG…AMLF), 116 to 136 (HFPA…AMAT), 141 to 161 (FLGG…AGMI), 183 to 203 (AAIA…LMIA), 223 to 243 (AALT…TLYL), 271 to 291 (VVVA…MAAS), 311 to 331 (IPVL…TSGV), 360 to 380 (AVTI…TRAM), 381 to 401 (VASQ…LLIL), and 419 to 439 (IVAG…VWAA).

It belongs to the NRAMP family.

It is found in the cell inner membrane. Functionally, h(+)-stimulated, divalent metal cation uptake system. The polypeptide is Divalent metal cation transporter MntH (Burkholderia ambifaria (strain ATCC BAA-244 / DSM 16087 / CCUG 44356 / LMG 19182 / AMMD) (Burkholderia cepacia (strain AMMD))).